A 703-amino-acid polypeptide reads, in one-letter code: Methionine--tRNA ligase (703 aa).

The 'HIGH' region motif lies at 12 to 22 (PYANGPLHIGH). Zn(2+)-binding residues include C143, C146, C156, and C159. A 'KMSKS' region motif is present at residues 331 to 335 (KMSKT). K334 contributes to the ATP binding site. Composition is skewed to low complexity over residues 556–568 (AAPQAAEARPAKG) and 577–594 (EAPAATQAAAPSAGAAES). 2 disordered regions span residues 556–594 (AAPQAAEARPAKGAKTEKKPAEAPAATQAAAPSAGAAES) and 682–703 (GPGGKELSLLDPGDVAPGSEVK). Residues 602–703 (DFAKVVLKAG…GDVAPGSEVK (102 aa)) form the tRNA-binding domain.

This sequence belongs to the class-I aminoacyl-tRNA synthetase family. MetG type 1 subfamily. Homodimer. Zn(2+) serves as cofactor.

The protein localises to the cytoplasm. It catalyses the reaction tRNA(Met) + L-methionine + ATP = L-methionyl-tRNA(Met) + AMP + diphosphate. Is required not only for elongation of protein synthesis but also for the initiation of all mRNA translation through initiator tRNA(fMet) aminoacylation. The polypeptide is Methionine--tRNA ligase (Myxococcus xanthus (strain DK1622)).